A 504-amino-acid polypeptide reads, in one-letter code: Cytochrome P450 4A2 (504 aa).

Residues 1 to 4 (MGFS) constitute a propeptide that is removed on maturation. Position 315 (Glu-315) interacts with heme. Ser-434 bears the Phosphoserine mark. Cys-451 contacts heme.

Belongs to the cytochrome P450 family. Heme is required as a cofactor.

The protein localises to the endoplasmic reticulum membrane. It localises to the microsome membrane. The catalysed reaction is an omega-methyl-long-chain fatty acid + reduced [NADPH--hemoprotein reductase] + O2 = an omega-hydroxy-long-chain fatty acid + oxidized [NADPH--hemoprotein reductase] + H2O + H(+). It catalyses the reaction dodecanoate + reduced [NADPH--hemoprotein reductase] + O2 = (11R)-hydroxydodecanoate + oxidized [NADPH--hemoprotein reductase] + H2O + H(+). It carries out the reaction dodecanoate + reduced [NADPH--hemoprotein reductase] + O2 = 12-hydroxydodecanoate + oxidized [NADPH--hemoprotein reductase] + H2O + H(+). The enzyme catalyses tetradecanoate + reduced [NADPH--hemoprotein reductase] + O2 = 14-hydroxytetradecanoate + oxidized [NADPH--hemoprotein reductase] + H2O + H(+). The catalysed reaction is hexadecanoate + reduced [NADPH--hemoprotein reductase] + O2 = 16-hydroxyhexadecanoate + oxidized [NADPH--hemoprotein reductase] + H2O + H(+). Its pathway is lipid metabolism; fatty acid metabolism. In terms of biological role, a cytochrome P450 monooxygenase that catalyzes omega and omega-1 hydroxylation of saturated fatty acids. Exhibits preferential omega versus omega-1 regioselectivity and (R) versus (S) stereoselectivity for hydroxylation of lauric and myristic acids. Has low activity toward palmitic acid. Mechanistically, uses molecular oxygen inserting one oxygen atom into a substrate, and reducing the second into a water molecule, with two electrons provided by NADPH via cytochrome P450 reductase (CPR; NADPH-ferrihemoprotein reductase). The polypeptide is Cytochrome P450 4A2 (Rattus norvegicus (Rat)).